A 383-amino-acid polypeptide reads, in one-letter code: Succinyl-diaminopimelate desuccinylase (383 aa).

His-79 contributes to the Zn(2+) binding site. Asp-81 is an active-site residue. Zn(2+) is bound at residue Asp-110. The Proton acceptor role is filled by Glu-141. Positions 142, 170, and 355 each coordinate Zn(2+).

This sequence belongs to the peptidase M20A family. DapE subfamily. In terms of assembly, homodimer. The cofactor is Zn(2+). It depends on Co(2+) as a cofactor.

It carries out the reaction N-succinyl-(2S,6S)-2,6-diaminopimelate + H2O = (2S,6S)-2,6-diaminopimelate + succinate. The protein operates within amino-acid biosynthesis; L-lysine biosynthesis via DAP pathway; LL-2,6-diaminopimelate from (S)-tetrahydrodipicolinate (succinylase route): step 3/3. Its function is as follows. Catalyzes the hydrolysis of N-succinyl-L,L-diaminopimelic acid (SDAP), forming succinate and LL-2,6-diaminopimelate (DAP), an intermediate involved in the bacterial biosynthesis of lysine and meso-diaminopimelic acid, an essential component of bacterial cell walls. This Helicobacter pylori (strain P12) protein is Succinyl-diaminopimelate desuccinylase.